The chain runs to 1090 residues: Exocyst complex component SEC5B (1090 aa).

Residues 1–12 are compositionally biased toward acidic residues; that stretch reads MSSSDDLDEDEL. Residues 1-126 form a disordered region; it reads MSSSDDLDED…ARKEDDRAWD (126 aa). Residues 23–46 are compositionally biased toward polar residues; it reads RDVTYQKPPSANSRKPVTNLVQQP. Low complexity predominate over residues 52 to 62; sequence AAAPPSKGGAK. Positions 96–109 are enriched in gly residues; that stretch reads GGGGDGGGGRGRGG. Residues 110-126 are compositionally biased toward basic and acidic residues; sequence SGKERGRARKEDDRAWD. Phosphoserine is present on Ser-179. Over residues 486-502 the composition is skewed to polar residues; it reads VQLSDDTSSMEDNQVQV. Disordered stretches follow at residues 486–511, 984–1013, and 1055–1090; these read VQLSDDTSSMEDNQVQVDQPLEESAR, ETVENNPGGHQRKPTRGSEDAISDDKQSSV, and PVAKAAYSRTSTDSPSRNYRESQPMGSPVQARPRRR. Positions 999–1010 are enriched in basic and acidic residues; that stretch reads RGSEDAISDDKQ. Residues 1062–1071 show a composition bias toward polar residues; the sequence is SRTSTDSPSR.

Belongs to the SEC5 family. In terms of assembly, the exocyst complex is composed of SEC3, SEC5, SEC6, SEC8, SEC10, EXO70A1 and EXO84B.

In terms of biological role, component of the exocyst complex involved in the docking of exocytic vesicles with fusion sites on the plasma membrane during regulated or polarized secretion. Involved in polarized cell growth and organ morphogenesis. During cytokinesis, involved in cell plate initiation, cell plate maturation and formation of new primary cell wall. The protein is Exocyst complex component SEC5B (SEC5B) of Arabidopsis thaliana (Mouse-ear cress).